A 362-amino-acid polypeptide reads, in one-letter code: Transcription factor Sox-7 (362 aa).

A disordered region spans residues 19-41 (MDGDLSDGLSPHRSPREKGSETR). A compositionally biased stretch (basic and acidic residues) spans 32–41 (SPREKGSETR). Residues 42 to 110 (IRRPMNAFMV…QHMQDYPNYK (69 aa)) constitute a DNA-binding region (HMG box). A Sox C-terminal domain is found at 246–362 (QPGSSMIPPV…ATYYNSYSVS (117 aa)).

In terms of tissue distribution, localized to the vegetal hemisphere of blastula embryos. Tissue-specific expression in early neurula (stage 13-14) embryos begins in the ciliate cells of the epidermis. Starting about stage 24, expression is found in a lateral stripe on each side of the embryo, with expression extending more posteriorly as development proceeds. Expressed in embryonic vasculature, as well as in the procardia tube, endocardium, notochord and hindbrain. As development proceeds, strong expression is seen in the hindbrain, posterior cardinal veins, aortic arch, stomodeal depression, epithelium and intersomitic arteries of stage 33/34 larvae. Expressed in posterior rhombomeres. By stage 40 larvae, expression in most of the vascular endothelia disappears, in particular in the posterior cardinal vein, but expression continues in the hindbrain. Expressed in a wide range of adult tissues, including ovary, testis, kidney, bladder, duodenum and liver.

The protein resides in the nucleus. In terms of biological role, transcription factor. Binds to the DNA sequence 5'-AACAAT-3'. Acts downstream of vegt and upstream of nodal signaling to promote endodermal and mesodermal differentiation by promoting vegt-induced expression of both endodermal genes (including endodermin) and mesodermal genes (including snai1/snail and snai2/slug). Induces expression of multiple nodal genes (including nodal, nodal2, nodal4, nodal5 and nodal6) and binds directly to sites within the promoter of the nodal5 gene. The endodermal and mesodermal specification pathways then interact to initiate cardiogenesis. Acts partially redundantly with sox18 during cardiogenesis. Also acts as an antagonist of beta-catenin signaling. Regulates (possibly indirectly) development of the pronephros, the functional larval kidney. This Xenopus laevis (African clawed frog) protein is Transcription factor Sox-7 (sox7).